The following is a 2346-amino-acid chain: Acetyl-CoA carboxylase 1 (2346 aa).

At M1 the chain carries N-acetylmethionine. S5, S23, S25, S29, S34, S48, S50, and S53 each carry phosphoserine. At T58 the chain carries Phosphothreonine. S78 carries the post-translational modification Phosphoserine. S80 carries the post-translational modification Phosphoserine; by AMPK. Positions V117 to A618 constitute a Biotin carboxylation domain. One can recognise an ATP-grasp domain in the interval S275 to M466. Position 315 to 320 (G315 to G320) interacts with ATP. Mg(2+)-binding residues include E424, E437, and N439. E424, E437, and N439 together coordinate Mn(2+). The active site involves R441. Position 610 is a phosphothreonine (T610). The 75-residue stretch at F745–Q819 folds into the Biotinyl-binding domain. Residue K786 is modified to N6-biotinyllysine. S835, S1201, S1216, and S1218 each carry phosphoserine. T1227 carries the post-translational modification Phosphothreonine. 3 positions are modified to phosphoserine: S1259, S1263, and S1273. At K1334 the chain carries N6-acetyllysine. The region spanning P1576 to N1914 is the CoA carboxyltransferase N-terminal domain. The tract at residues P1576 to N2234 is carboxyltransferase. Positions 1823, 2127, and 2129 each coordinate CoA. The 317-residue stretch at P1918–N2234 folds into the CoA carboxyltransferase C-terminal domain. T2153 is modified (phosphothreonine).

As to quaternary structure, monomer, homodimer, and homotetramer. Can form filamentous polymers. Interacts in its inactive phosphorylated form with the BRCT domains of BRCA1 which prevents ACACA dephosphorylation and inhibits lipid synthesis. Interacts with MID1IP1; interaction with MID1IP1 promotes oligomerization and increases its activity. Mg(2+) serves as cofactor. Mn(2+) is required as a cofactor. It depends on biotin as a cofactor. Phosphorylation on Ser-1263 is required for interaction with BRCA1. Post-translationally, phosphorylation at Ser-80 by AMPK inactivates enzyme activity. In terms of processing, the biotin cofactor is covalently attached to the central biotinyl-binding domain and is required for the catalytic activity.

Its subcellular location is the cytoplasm. It localises to the cytosol. It carries out the reaction hydrogencarbonate + acetyl-CoA + ATP = malonyl-CoA + ADP + phosphate + H(+). The protein operates within lipid metabolism; malonyl-CoA biosynthesis; malonyl-CoA from acetyl-CoA: step 1/1. Its activity is regulated as follows. Inhibited by phosphorylation. Citrate promotes oligomerization of the protein into filaments that correspond to the most active form of the carboxylase. Cytosolic enzyme that catalyzes the carboxylation of acetyl-CoA to malonyl-CoA, the first and rate-limiting step of de novo fatty acid biosynthesis. This is a 2 steps reaction starting with the ATP-dependent carboxylation of the biotin carried by the biotin carboxyl carrier (BCC) domain followed by the transfer of the carboxyl group from carboxylated biotin to acetyl-CoA. This Bos taurus (Bovine) protein is Acetyl-CoA carboxylase 1.